The primary structure comprises 2035 residues: Host cell factor 1 (2035 aa).

N-acetylalanine is present on alanine 2. The residue at position 6 (serine 6) is a Phosphoserine. Kelch repeat units lie at residues leucine 44–cysteine 89, arginine 93–histidine 140, lysine 148–glycine 194, lysine 217–asparagine 265, and lysine 266–threonine 313. Residues lysine 105, lysine 163, and lysine 244 each participate in a glycyl lysine isopeptide (Lys-Gly) (interchain with G-Cter in ubiquitin) cross-link. A Glycyl lysine isopeptide (Lys-Gly) (interchain with G-Cter in SUMO2) cross-link involves residue lysine 282. An N6-acetyllysine modification is found at lysine 288. Lysine 363 is covalently cross-linked (Glycyl lysine isopeptide (Lys-Gly) (interchain with G-Cter in ubiquitin)). Residues proline 366 to threonine 466 enclose the Fibronectin type-III 1 domain. The interval alanine 407–alanine 434 is disordered. Serine 411 carries the post-translational modification Phosphoserine. The span at threonine 413–proline 428 shows a compositional bias: pro residues. The tract at residues leucine 500–alanine 550 is required for interaction with OGT. Arginine 504 and arginine 524 each carry omega-N-methylarginine. Serine 598, serine 666, and serine 669 each carry phosphoserine. Positions leucine 610–leucine 722 are interaction with SIN3A. The tract at residues isoleucine 750 to threonine 902 is interaction with ZBTB17. Lysine 813 bears the N6-acetyllysine mark. Residues lysine 813–threonine 912 are interaction with GABP2. 3 HCF repeat repeats span residues threonine 1010–alanine 1035, valine 1072–asparagine 1097, and glutamine 1101–serine 1126. The stretch at alanine 1158 to threonine 1183 is one HCF repeat 4; degenerate repeat. A Phosphoserine modification is found at serine 1205. An Omega-N-methylarginine modification is found at arginine 1219. Serine 1224 carries the phosphoserine modification. HCF repeat repeat units follow at residues threonine 1286–glycine 1311 and glutamine 1314–asparagine 1339. Disordered regions lie at residues proline 1292–valine 1371, threonine 1435–serine 1470, and valine 1487–proline 1515. Low complexity-rich tracts occupy residues threonine 1299–serine 1312, threonine 1329–asparagine 1339, and threonine 1362–valine 1371. The HCF repeat 7; degenerate repeat unit spans residues glutamine 1349 to glycine 1374. Residues glutamine 1414–asparagine 1439 form an HCF repeat 8 repeat. At threonine 1491 the chain carries Phosphothreonine. The span at valine 1493–glutamate 1502 shows a compositional bias: pro residues. Phosphoserine occurs at positions 1497, 1507, and 1771. Fibronectin type-III domains are found at residues leucine 1797 to proline 1888 and phenylalanine 1890 to aspartate 2006. Glycyl lysine isopeptide (Lys-Gly) (interchain with G-Cter in ubiquitin) cross-links involve residues lysine 1807 and lysine 1808. Position 1838 is a phosphoserine (serine 1838). The tract at residues alanine 1994–glutamine 2035 is disordered. Lysine 2005 is subject to N6-acetyllysine. Residue lysine 2024 forms a Glycyl lysine isopeptide (Lys-Gly) (interchain with G-Cter in SUMO2) linkage.

Composed predominantly of six polypeptides ranging from 110 to 150 kDa and a minor 300 kDa polypeptide. The majority of N- and C-terminal cleavage products remain tightly, albeit non-covalently, associated. Interacts with POU2F1, CREB3, ZBTB17, EGR2, E2F4, CREBZF, SP1, GABP2, Sin3 HDAC complex (SIN3A, HDAC1, HDAC2, SUDS3), SAP30, SIN3B and FHL2. Component of a MLL1 complex, composed of at least the core components KMT2A/MLL1, ASH2L, HCFC1, WDR5 and RBBP5, as well as the facultative components BACC1, CHD8, DPY30, E2F6, HCFC2, HSP70, INO80C, KANSL1, LAS1L, MAX, MCRS1, MEN1, MGA, KAT8, PELP1, PHF20, PRP31, RING2, RUVBL1, RUVBL2, SENP3, TAF1, TAF4, TAF6, TAF7, TAF9 and TEX10. Component of a THAP1/THAP3-HCFC1-OGT complex that is required for the regulation of the transcriptional activity of RRM1. Interacts directly with THAP3 (via its HBM). Interacts (via the Kelch-repeat domain) with THAP1 (via the HBM); the interaction recruits HCHC1 to the RRM1. Interacts with THAP7 and THAP11 (via the HMB). Interacts directly with OGT; the interaction, which requires the HCFC1 cleavage site domain, glycosylates and promotes the proteolytic processing of HCFC1, retains OGT in the nucleus and impacts the expression of herpes simplex virus immediate early viral genes. Component of the SET1 complex, at least composed of the catalytic subunit (SETD1A or SETD1B), WDR5, WDR82, RBBP5, ASH2L, CXXC1, HCFC1 and DPY30. Component of the NSL complex at least composed of MOF/KAT8, KANSL1, KANSL2, KANSL3, MCRS1, PHF20, OGT1/OGT, WDR5 and HCFC1. Component of a complex at least composed of ZNF335, HCFC1, CCAR2, EMSY, MKI67, RBBP5, ASH2L and WDR5; the complex is formed as a result of interactions between components of a nuclear receptor-mediated transcription complex and a histone methylation complex. Within the complex interacts with ZNF335. Interacts with TET2 and TET3. Interacts with HCFC1R1. Interacts with THAP11. Interacts (via Kelch domain) with KMT2E/MLL5 isoform 3 (via HBM motif). Interacts with E2F1. Accessory scaffold component of the polycomb repressive deubiquitinase (PR-DUB) complex, at least composed of BAP1, one of ASXL1, ASXL2 or (probably) ASXL3 and one of MBD5 or MBD6; the PR-DUB core associates with a number of accessory proteins, including FOXK1, FOXK2, KDM1B, HCFC1, YY1 and OGT. Interacts with YY1 (via Gly-rich region); the interaction is direct. Interacts with BAP1 (via HBM-like motif). In terms of assembly, (Microbial infection) Associates with the VP16-induced complex; binding to HCFC1 activates the viral transcriptional activator VP16 for association with POU2F1, to form a multiprotein-DNA complex responsible for activating transcription of the viral immediate early genes. Interacts with the viral transactivator protein VP16. In terms of processing, proteolytically cleaved at one or several PPCE--THET sites within the HCF repeats. Further cleavage of the primary N- and C-terminal chains results in a 'trimming' and accumulation of the smaller chains. Cleavage is promoted by O-glycosylation. Post-translationally, O-glycosylated. GlcNAcylation by OGT promotes proteolytic processing. Ubiquitinated. Lys-1807 and Lys-1808 are ubiquitinated both via 'Lys-48'- and 'Lys-63'-linked polyubiquitin chains. BAP1 mediated deubiquitination of 'Lys-48'-linked polyubiquitin chains; deubiquitination by BAP1 does not seem to stabilize the protein. In terms of tissue distribution, highly expressed in fetal tissues and the adult kidney. Present in all tissues tested.

The protein localises to the cytoplasm. It localises to the nucleus. Functionally, transcriptional coregulator. Serves as a scaffold protein, bridging interactions between transcription factors, including THAP11 and ZNF143, and transcriptional coregulators. Involved in control of the cell cycle. Also antagonizes transactivation by ZBTB17 and GABP2; represses ZBTB17 activation of the p15(INK4b) promoter and inhibits its ability to recruit p300. Coactivator for EGR2 and GABP2. Tethers the chromatin modifying Set1/Ash2 histone H3 'Lys-4' methyltransferase (H3K4me) and Sin3 histone deacetylase (HDAC) complexes (involved in the activation and repression of transcription, respectively) together. Component of a THAP1/THAP3-HCFC1-OGT complex that is required for the regulation of the transcriptional activity of RRM1. As part of the NSL complex it may be involved in acetylation of nucleosomal histone H4 on several lysine residues. Recruits KMT2E/MLL5 to E2F1 responsive promoters promoting transcriptional activation and thereby facilitates G1 to S phase transition. Modulates expression of homeobox protein PDX1, perhaps acting in concert with transcription factor E2F1, thereby regulating pancreatic beta-cell growth and glucose-stimulated insulin secretion. May negatively modulate transcriptional activity of FOXO3. In terms of biological role, (Microbial infection) In case of human herpes simplex virus (HSV) infection, HCFC1 forms a multiprotein-DNA complex with the viral transactivator protein VP16 and POU2F1 thereby enabling the transcription of the viral immediate early genes. This Homo sapiens (Human) protein is Host cell factor 1.